The chain runs to 433 residues: MTIDKKPVTAPESDSKSAAGRKYWTQLCTPILSSLLKSSGSYSAEEQETHIQNLSDYVIPNLGPRPSEAHTKSFLTQSGSPFQPSVNFSSKKTQVRYCWELLGPQGGSDSDPLAVEAAQDILSQLCKAFGYSTRWSDTWLSAFAPTLEEAKSVREMLPKWIATFTGGAELPALKRVPFVFVAFDLDGAKTSMKAYYNPKGKEIATGKPASDLTWKVLRSLTPALSSTAIDLVEKFLAERPVFSAVELVGIDLVDEAGLSDARVKLYVHTENNSFNTVRDYITLGGRLQDETTLKGLAILKDIWHLMLQEPDGTDDDYNKPVNDSTMLCQRAYFSFEMRPGRELPEVKTYLPTWNYVRTDLETIQNYEEVFRRCGFEWGKESKYKELFERAFGPANHDRPKPVHCDASYLYSEKKGIYQTLYFSPPLKDGEEYE.

This sequence belongs to the tryptophan dimethylallyltransferase family.

It participates in secondary metabolite biosynthesis. Indole diterpene prenyltransferase; part of the gene cluster that mediates the biosynthesis of terpendoles, indole-diterpene (IDT) mycotoxins including terpendole I, terpendole K, terpendole C, as well as the kinesin Eg5 inhibitor terpendole E. Terpendoles biosynthesis begins with the synthesis of geranylgeranyl diphosphate (GGPP) by a yet unidentified GGPP synthase. Condensation of indole-3-glycerol phosphate with GGPP by the prenyltransferase terC then forms 3-geranylgeranylindole (3-GGI), followed by epoxidation and cyclization of this intermediate (by the FAD-dependent monooxygeanse terM and the terpene cyclase terB) to form paspaline. The cytochrome monooxygenase terQ then hydroxylates paspalline at C-11 to yield terpendole E. The cytochrome monooxygenase terP converts terpendole E to 13-desoxyterpendole I, and terQ converts 13-desoxyterpendole I into terpendole I. TerF and terK are required for conversion of terpendole I to terpendole C which is further converted to terpendole K. The sequence is that of Indole diterpene prenyltransferase terF from Tolypocladium album (Soil fungus).